The primary structure comprises 416 residues: E3 ubiquitin-protein ligase RNFT1 (416 aa).

The span at 27–45 shows a compositional bias: polar residues; it reads QSSSGHTHHQPGSNDSPSV. 2 disordered regions span residues 27–50 and 63–116; these read QSSSGHTHHQPGSNDSPSVCMSLP and GDVT…ADSR. A compositionally biased stretch (basic residues) spans 77 to 86; it reads GARSSSRRVR. 6 helical membrane-spanning segments follow: residues 146–166, 184–204, 214–234, 237–257, 265–287, and 302–322; these read LVVQHITGISVGIGLLTTFLY, LQCLWILVFLLFSSLLLYYTF, VFMNPSLGPLHFFDALWVVGI, FIGKFFFMGLKCIILLVPSFV, YWYMALEEVAQCYCMLVSTPVWF, and WHFGILLALLYLILKLLIIFG. Residues 349 to 400 are required for ubiquitin ligase activity and for protection against ER stress-induced cell death; the sequence is CSEVDGMCAICQAEFIKPIVLVCQHVFCEECISLWFNKEKTCPLCRTVISNQ. The RING-type zinc-finger motif lies at 356–394; the sequence is CAICQAEFIKPIVLVCQHVFCEECISLWFNKEKTCPLCR.

The protein resides in the endoplasmic reticulum membrane. It catalyses the reaction S-ubiquitinyl-[E2 ubiquitin-conjugating enzyme]-L-cysteine + [acceptor protein]-L-lysine = [E2 ubiquitin-conjugating enzyme]-L-cysteine + N(6)-ubiquitinyl-[acceptor protein]-L-lysine.. It participates in protein modification; protein ubiquitination. Functionally, E3 ubiquitin-protein ligase that acts in the endoplasmic reticulum (ER)-associated degradation (ERAD) pathway, which targets misfolded proteins that accumulate in the endoplasmic reticulum (ER) for ubiquitination and subsequent proteasome-mediated degradation. Protects cells from ER stress-induced apoptosis. This is E3 ubiquitin-protein ligase RNFT1 (rnft1) from Xenopus tropicalis (Western clawed frog).